Reading from the N-terminus, the 527-residue chain is Laccase-5 (527 aa).

An N-terminal signal peptide occupies residues Met1 to Gly23. The 126-residue stretch at Ile25–Tyr150 folds into the Plastocyanin-like 1 domain. Asn74 and Asn77 each carry an N-linked (GlcNAc...) asparagine glycan. 4 residues coordinate Cu cation: His87, His89, His132, and His134. 2 disulfides stabilise this stretch: Cys108–Cys516 and Cys140–Cys230. 10 N-linked (GlcNAc...) asparagine glycosylation sites follow: Asn156, Asn209, Asn233, Asn242, Asn276, Asn317, Asn358, Asn366, Asn393, and Asn402. A Plastocyanin-like 2 domain is found at Val162–Tyr306. Positions Thr373–Asp498 constitute a Plastocyanin-like 3 domain. Cu cation contacts are provided by His425, His428, His430, His480, Cys481, His482, and His486.

This sequence belongs to the multicopper oxidase family. Cu cation is required as a cofactor.

It is found in the secreted. The enzyme catalyses 4 hydroquinone + O2 = 4 benzosemiquinone + 2 H2O. Lignin degradation and detoxification of lignin-derived products. This chain is Laccase-5 (LCC5), found in Trametes versicolor (White-rot fungus).